The following is a 947-amino-acid chain: Serine-aspartate repeat-containing protein C (947 aa).

A signal peptide spans 1 to 50 (MNNKKTATNRKGMIPNRLNKFSIRKYSVGTASILVGTTLIFGLSGHEAKA). A disordered region spans residues 51–164 (AEHTNGELNQ…STTPKTTTIK (114 aa)). A ligand binding A region region spans residues 51–495 (AEHTNGELNQ…GSSTANGDQK (445 aa)). Residues 56–71 (GELNQSKNETTAPSEN) show a composition bias toward polar residues. Basic and acidic residues predominate over residues 72-83 (KTTKKVDSRQLK). The span at 84-155 (DNTQTATADQ…SNLTQAKDVS (72 aa)) shows a compositional bias: polar residues. CNA-B domains are found at residues 496 to 606 (KYNL…YKTP) and 607 to 717 (KYSL…EEET). A disordered region spans residues 678 to 927 (TQTGTNTTED…NNSNNGTLFG (250 aa)). Composition is skewed to acidic residues over residues 685–695 (TEDDKDADGGE) and 712–886 (YYEE…DSDS). Positions 910 to 914 (LPETG) match the LPXTG sorting signal motif. Residues 912 to 927 (ETGSENNNSNNGTLFG) are compositionally biased toward low complexity. Threonine 913 carries the post-translational modification Pentaglycyl murein peptidoglycan amidated threonine. Residues 914-947 (GSENNNSNNGTLFGGLFAALGSLLLFGRRKKQNK) constitute a propeptide, removed by sortase.

Belongs to the serine-aspartate repeat-containing protein (SDr) family. As to quaternary structure, homodimerizes; via N2-Domain. Interacts with host NRXN1; this interaction mediates bacterial attachment to host cells.

Its subcellular location is the secreted. The protein resides in the cell wall. Its function is as follows. Cell surface-associated calcium-binding protein which plays an important role in adhesion and pathogenesis. Mediates interactions with components of the extracellular matrix such as host NRXN1 to promote bacterial adhesion. The chain is Serine-aspartate repeat-containing protein C (sdrC) from Staphylococcus aureus (strain COL).